The chain runs to 205 residues: Large ribosomal subunit protein uL4 (205 aa).

Residues 56–78 (VSGTTAKPYRQKHTGRARQGSLR) form a disordered region.

It belongs to the universal ribosomal protein uL4 family. In terms of assembly, part of the 50S ribosomal subunit.

One of the primary rRNA binding proteins, this protein initially binds near the 5'-end of the 23S rRNA. It is important during the early stages of 50S assembly. It makes multiple contacts with different domains of the 23S rRNA in the assembled 50S subunit and ribosome. In terms of biological role, forms part of the polypeptide exit tunnel. The chain is Large ribosomal subunit protein uL4 from Ehrlichia ruminantium (strain Gardel).